The primary structure comprises 275 residues: Ribosomal RNA small subunit methyltransferase A (275 aa).

Residues Asn-28, Leu-30, Gly-55, Glu-77, Asp-103, and Asn-123 each coordinate S-adenosyl-L-methionine.

It belongs to the class I-like SAM-binding methyltransferase superfamily. rRNA adenine N(6)-methyltransferase family. RsmA subfamily.

It is found in the cytoplasm. The enzyme catalyses adenosine(1518)/adenosine(1519) in 16S rRNA + 4 S-adenosyl-L-methionine = N(6)-dimethyladenosine(1518)/N(6)-dimethyladenosine(1519) in 16S rRNA + 4 S-adenosyl-L-homocysteine + 4 H(+). Its function is as follows. Specifically dimethylates two adjacent adenosines (A1518 and A1519) in the loop of a conserved hairpin near the 3'-end of 16S rRNA in the 30S particle. May play a critical role in biogenesis of 30S subunits. The polypeptide is Ribosomal RNA small subunit methyltransferase A (Rhizobium johnstonii (strain DSM 114642 / LMG 32736 / 3841) (Rhizobium leguminosarum bv. viciae)).